Reading from the N-terminus, the 248-residue chain is Ubiquinone biosynthesis O-methyltransferase (248 aa).

S-adenosyl-L-methionine contacts are provided by arginine 41, glycine 72, aspartate 93, and methionine 136.

Belongs to the methyltransferase superfamily. UbiG/COQ3 family.

It carries out the reaction a 3-demethylubiquinol + S-adenosyl-L-methionine = a ubiquinol + S-adenosyl-L-homocysteine + H(+). It catalyses the reaction a 3-(all-trans-polyprenyl)benzene-1,2-diol + S-adenosyl-L-methionine = a 2-methoxy-6-(all-trans-polyprenyl)phenol + S-adenosyl-L-homocysteine + H(+). It participates in cofactor biosynthesis; ubiquinone biosynthesis. Functionally, O-methyltransferase that catalyzes the 2 O-methylation steps in the ubiquinone biosynthetic pathway. The chain is Ubiquinone biosynthesis O-methyltransferase from Brucella abortus (strain 2308).